Here is a 507-residue protein sequence, read N- to C-terminus: Variant surface glycoprotein ILTAT 1.25 (507 aa).

The N-terminal stretch at 1–21 (MQSQQQPVFISIILLAINTDA) is a signal peptide. A compositionally biased stretch (basic and acidic residues) spans 83–95 (EPEAAPKESRSDE). Residues 83 to 102 (EPEAAPKESRSDETPEACKA) are disordered. N-linked (GlcNAc...) asparagine glycans are attached at residues Asn141 and Asn371. Over residues 384–395 (PTKQPPAKAAAA) the composition is skewed to low complexity. Residues 384 to 474 (PTKQPPAKAA…KKEEECKSPN (91 aa)) are disordered. Residues 396–420 (PEKKSNPQKDCNKNTKKRDCKEGDG) show a composition bias toward basic and acidic residues. Residues 444–455 (SAAGAGDAGASD) are compositionally biased toward low complexity. Residues 456–474 (TEAKKCSDKKKEEECKSPN) are compositionally biased toward basic and acidic residues. Asp484 carries the GPI-anchor amidated aspartate lipid modification. Residues 485–507 (SSILANKQFALSVASAAFVALLF) constitute a propeptide, removed in mature form.

It localises to the cell membrane. In terms of biological role, VSG forms a coat on the surface of the parasite. The trypanosome evades the immune response of the host by expressing a series of antigenically distinct VSGs from an estimated 1000 VSG genes. This chain is Variant surface glycoprotein ILTAT 1.25, found in Trypanosoma brucei brucei.